A 334-amino-acid chain; its full sequence is Phosphate acyltransferase (334 aa).

It belongs to the PlsX family. As to quaternary structure, homodimer. Probably interacts with PlsY.

It localises to the cytoplasm. The catalysed reaction is a fatty acyl-[ACP] + phosphate = an acyl phosphate + holo-[ACP]. It participates in lipid metabolism; phospholipid metabolism. Its function is as follows. Catalyzes the reversible formation of acyl-phosphate (acyl-PO(4)) from acyl-[acyl-carrier-protein] (acyl-ACP). This enzyme utilizes acyl-ACP as fatty acyl donor, but not acyl-CoA. The protein is Phosphate acyltransferase of Clostridium tetani (strain Massachusetts / E88).